The sequence spans 236 residues: 1-(5-phosphoribosyl)-5-[(5-phosphoribosylamino)methylideneamino] imidazole-4-carboxamide isomerase (236 aa).

Catalysis depends on D8, which acts as the Proton acceptor. D127 serves as the catalytic Proton donor.

It belongs to the HisA/HisF family.

It is found in the cytoplasm. The enzyme catalyses 1-(5-phospho-beta-D-ribosyl)-5-[(5-phospho-beta-D-ribosylamino)methylideneamino]imidazole-4-carboxamide = 5-[(5-phospho-1-deoxy-D-ribulos-1-ylimino)methylamino]-1-(5-phospho-beta-D-ribosyl)imidazole-4-carboxamide. The protein operates within amino-acid biosynthesis; L-histidine biosynthesis; L-histidine from 5-phospho-alpha-D-ribose 1-diphosphate: step 4/9. The chain is 1-(5-phosphoribosyl)-5-[(5-phosphoribosylamino)methylideneamino] imidazole-4-carboxamide isomerase from Campylobacter hominis (strain ATCC BAA-381 / DSM 21671 / CCUG 45161 / LMG 19568 / NCTC 13146 / CH001A).